A 354-amino-acid polypeptide reads, in one-letter code: DNA polymerase IV 2 (354 aa).

The 181-residue stretch at 4–184 folds into the UmuC domain; it reads IIHIDMDAFY…LPVKKFHGVG (181 aa). The Mg(2+) site is built by Asp-8 and Asp-102. The active site involves Glu-103.

The protein belongs to the DNA polymerase type-Y family. As to quaternary structure, monomer. Requires Mg(2+) as cofactor.

It localises to the cytoplasm. The catalysed reaction is DNA(n) + a 2'-deoxyribonucleoside 5'-triphosphate = DNA(n+1) + diphosphate. Poorly processive, error-prone DNA polymerase involved in untargeted mutagenesis. Copies undamaged DNA at stalled replication forks, which arise in vivo from mismatched or misaligned primer ends. These misaligned primers can be extended by PolIV. Exhibits no 3'-5' exonuclease (proofreading) activity. May be involved in translesional synthesis, in conjunction with the beta clamp from PolIII. This Rhizobium meliloti (strain 1021) (Ensifer meliloti) protein is DNA polymerase IV 2 (dinB2).